A 301-amino-acid chain; its full sequence is 4-hydroxybenzoate octaprenyltransferase (301 aa).

The next 8 membrane-spanning stretches (helical) occupy residues 34 to 54, 57 to 77, 108 to 128, 152 to 172, 176 to 196, 221 to 241, 245 to 265, and 279 to 299; these read IGSL…ADGL, LWTL…GCVI, LWVF…LNWL, LPQV…FAAV, VPLL…AYDT, FDLI…VLVG, DLGV…AYEF, and AFLH…VAVA.

It belongs to the UbiA prenyltransferase family. Requires Mg(2+) as cofactor.

The protein resides in the cell inner membrane. It carries out the reaction all-trans-octaprenyl diphosphate + 4-hydroxybenzoate = 4-hydroxy-3-(all-trans-octaprenyl)benzoate + diphosphate. It functions in the pathway cofactor biosynthesis; ubiquinone biosynthesis. Functionally, catalyzes the prenylation of para-hydroxybenzoate (PHB) with an all-trans polyprenyl group. Mediates the second step in the final reaction sequence of ubiquinone-8 (UQ-8) biosynthesis, which is the condensation of the polyisoprenoid side chain with PHB, generating the first membrane-bound Q intermediate 3-octaprenyl-4-hydroxybenzoate. The sequence is that of 4-hydroxybenzoate octaprenyltransferase from Xanthomonas euvesicatoria pv. vesicatoria (strain 85-10) (Xanthomonas campestris pv. vesicatoria).